The sequence spans 129 residues: Ribosome-binding factor A (129 aa).

Belongs to the RbfA family. In terms of assembly, monomer. Binds 30S ribosomal subunits, but not 50S ribosomal subunits or 70S ribosomes.

It localises to the cytoplasm. In terms of biological role, one of several proteins that assist in the late maturation steps of the functional core of the 30S ribosomal subunit. Associates with free 30S ribosomal subunits (but not with 30S subunits that are part of 70S ribosomes or polysomes). Required for efficient processing of 16S rRNA. May interact with the 5'-terminal helix region of 16S rRNA. This chain is Ribosome-binding factor A, found in Marinomonas sp. (strain MWYL1).